Reading from the N-terminus, the 817-residue chain is Exocyst complex component 6 (817 aa).

Coiled coils occupy residues 87–149 (QSFV…DQIA) and 247–270 (TDAERAKKIQEEARKNASNVEIEV).

This sequence belongs to the SEC15 family. In terms of assembly, the exocyst complex is composed of sec-3/exoc1, sec-5/exoc2, sec-6/exoc3, sec-8/exoc4, sec-10/exoc5, sec-15/exoc6, exo-70/exoc7 and exo-84/exoc8.

In terms of biological role, component of the exocyst complex involved in the docking of exocytic vesicles with fusion sites on the plasma membrane. This Caenorhabditis elegans protein is Exocyst complex component 6 (sec-15).